The following is a 402-amino-acid chain: Argininosuccinate synthase (402 aa).

ATP-binding positions include 11–19 (AYSGGLDTS) and Ala-39. Positions 90 and 95 each coordinate L-citrulline. Gly-120 serves as a coordination point for ATP. L-aspartate-binding residues include Thr-122, Asn-126, and Asp-127. Asn-126 is an L-citrulline binding site. L-citrulline is bound by residues Arg-130, Ser-179, Ser-188, Glu-264, and Tyr-276.

This sequence belongs to the argininosuccinate synthase family. Type 1 subfamily. As to quaternary structure, homotetramer.

It localises to the cytoplasm. The enzyme catalyses L-citrulline + L-aspartate + ATP = 2-(N(omega)-L-arginino)succinate + AMP + diphosphate + H(+). The protein operates within amino-acid biosynthesis; L-arginine biosynthesis; L-arginine from L-ornithine and carbamoyl phosphate: step 2/3. The sequence is that of Argininosuccinate synthase from Roseiflexus castenholzii (strain DSM 13941 / HLO8).